The following is a 189-amino-acid chain: Peptidyl-tRNA hydrolase (189 aa).

A tRNA-binding site is contributed by Y14. H19 serves as the catalytic Proton acceptor. Residues F64, N66, and N112 each contribute to the tRNA site.

Belongs to the PTH family. As to quaternary structure, monomer.

It localises to the cytoplasm. The catalysed reaction is an N-acyl-L-alpha-aminoacyl-tRNA + H2O = an N-acyl-L-amino acid + a tRNA + H(+). In terms of biological role, hydrolyzes ribosome-free peptidyl-tRNAs (with 1 or more amino acids incorporated), which drop off the ribosome during protein synthesis, or as a result of ribosome stalling. Functionally, catalyzes the release of premature peptidyl moieties from peptidyl-tRNA molecules trapped in stalled 50S ribosomal subunits, and thus maintains levels of free tRNAs and 50S ribosomes. The chain is Peptidyl-tRNA hydrolase from Zymomonas mobilis subsp. mobilis (strain ATCC 31821 / ZM4 / CP4).